The chain runs to 273 residues: Type III pantothenate kinase (273 aa).

5-12 is an ATP binding site; sequence DVGNSHVV. Residue 112 to 115 coordinates substrate; it reads GTDL. The active-site Proton acceptor is the Asp-114. Asp-134 provides a ligand contact to K(+). Thr-137 serves as a coordination point for ATP. Thr-189 is a substrate binding site.

Belongs to the type III pantothenate kinase family. In terms of assembly, homodimer. Requires NH4(+) as cofactor. K(+) is required as a cofactor.

The protein resides in the cytoplasm. The catalysed reaction is (R)-pantothenate + ATP = (R)-4'-phosphopantothenate + ADP + H(+). The protein operates within cofactor biosynthesis; coenzyme A biosynthesis; CoA from (R)-pantothenate: step 1/5. Catalyzes the phosphorylation of pantothenate (Pan), the first step in CoA biosynthesis. The sequence is that of Type III pantothenate kinase from Treponema pallidum (strain Nichols).